Here is a 202-residue protein sequence, read N- to C-terminus: Coiled-coil domain-containing protein 85B (202 aa).

An N-acetylmethionine modification is found at Met-1. 2 coiled-coil regions span residues 44 to 82 (RLMQ…DLCC) and 118 to 141 (QKLA…KELC). Gly residues predominate over residues 152–162 (GGPGGAVGSGA). The tract at residues 152–202 (GGPGGAVGSGAGPTPELALPPCGPRDLGDGSSSTGSVGSPDQLPLACSPDD) is disordered. Residues 180-190 (DGSSSTGSVGS) show a composition bias toward low complexity.

The protein belongs to the CCDC85 family. As to quaternary structure, interacts with CEBPB. May interact with CEBPD. Interacts with EURL. Interacts with MCRS1. Interacts with TCF7L2; competes with CTNNB1. Interacts with ANKRD26. Interacts with the beta-catenin family proteins ARVCF, CTNND1, CTNND2 and PKP4. In terms of tissue distribution, expressed in white and brown adipose tissue.

It localises to the nucleus. It is found in the cytoplasm. Its subcellular location is the cytoskeleton. The protein localises to the microtubule organizing center. The protein resides in the centrosome. It localises to the cell junction. It is found in the adherens junction. Functions as a transcriptional repressor. May inhibit the activity of CTNNB1 in a TP53-dependent manner and thus regulate cell growth. May function in adipocyte differentiation, negatively regulating mitotic clonal expansion. Plays a role in cell-cell adhesion and epithelium development through its interaction with proteins of the beta-catenin family. The polypeptide is Coiled-coil domain-containing protein 85B (Ccdc85b) (Mus musculus (Mouse)).